The chain runs to 235 residues: Elongation factor Tu (235 aa).

Residues 1 to 125 form the tr-type G domain; that stretch reads KNMITGATQM…DGDKYIPTPS (125 aa). 47-50 contacts GTP; the sequence is NKQD.

This sequence belongs to the TRAFAC class translation factor GTPase superfamily. Classic translation factor GTPase family. EF-Tu/EF-1A subfamily. As to quaternary structure, monomer.

The protein localises to the cytoplasm. It catalyses the reaction GTP + H2O = GDP + phosphate + H(+). In terms of biological role, GTP hydrolase that promotes the GTP-dependent binding of aminoacyl-tRNA to the A-site of ribosomes during protein biosynthesis. The polypeptide is Elongation factor Tu (tufA) (Leptolyngbya boryana (Plectonema boryanum)).